The primary structure comprises 37 residues: Large ribosomal subunit protein bL36 (37 aa).

The protein belongs to the bacterial ribosomal protein bL36 family.

The polypeptide is Large ribosomal subunit protein bL36 (Methylibium petroleiphilum (strain ATCC BAA-1232 / LMG 22953 / PM1)).